We begin with the raw amino-acid sequence, 435 residues long: Uracil permease (435 aa).

The next 12 membrane-spanning stretches (helical) occupy residues Phe-17–Val-37, Gly-42–Ile-62, Ile-67–Thr-87, Gly-91–Ile-111, Ile-122–Thr-142, Leu-161–Leu-181, Leu-191–Leu-213, Val-234–Ile-254, Val-311–Gly-331, Leu-336–Ile-356, Asn-376–Ser-396, and Gly-399–Leu-419.

This sequence belongs to the nucleobase:cation symporter-2 (NCS2) (TC 2.A.40) family.

It localises to the cell membrane. Its function is as follows. Transport of uracil in the cell. The chain is Uracil permease (pyrP) from Bacillus subtilis (strain 168).